Consider the following 352-residue polypeptide: Gamma-aminobutyric acid-binding protein (352 aa).

An N-terminal signal peptide occupies residues 1-28; the sequence is MFKSLHQYAHVFSRLSLFGLAFAAAAQA.

This sequence belongs to the bacterial solute-binding protein 1 family.

It is found in the periplasm. Its function is as follows. Binds specifically gamma-aminobutyric acid (GABA) with nanomolar affinity. Does not bind structurally related compounds such as 4-aminovaleric acid, spermidine, histamine and butyric acid. The chain is Gamma-aminobutyric acid-binding protein from Pseudomonas aeruginosa (strain ATCC 15692 / DSM 22644 / CIP 104116 / JCM 14847 / LMG 12228 / 1C / PRS 101 / PAO1).